A 523-amino-acid polypeptide reads, in one-letter code: 11-oxo-beta-amyrin 30-oxidase (523 aa).

A helical transmembrane segment spans residues 9–29; the sequence is AIWVVLTVILAAIPIWVCHMV. Cys-471 is a heme binding site.

It belongs to the cytochrome P450 family. It depends on heme as a cofactor. Expressed in roots, stolons and stems. Not detected in leaves.

It localises to the membrane. It catalyses the reaction 11-oxo-beta-amyrin + 3 reduced [NADPH--hemoprotein reductase] + 3 O2 = glycyrrhetinate + 3 oxidized [NADPH--hemoprotein reductase] + 4 H2O + 4 H(+). The catalysed reaction is 11-oxo-beta-amyrin + reduced [NADPH--hemoprotein reductase] + O2 = 30-hydroxy-11-oxo-beta-amyrin + oxidized [NADPH--hemoprotein reductase] + H2O + H(+). The enzyme catalyses 30-hydroxy-11-oxo-beta-amyrin + reduced [NADPH--hemoprotein reductase] + O2 = glycyrrhetaldehyde + oxidized [NADPH--hemoprotein reductase] + 2 H2O + H(+). It carries out the reaction glycyrrhetaldehyde + reduced [NADPH--hemoprotein reductase] + O2 = glycyrrhetinate + oxidized [NADPH--hemoprotein reductase] + H2O + 2 H(+). Its function is as follows. Involved in the biosynthesis of Glycyrrhetinic acid (GA), a natural product which exhibits anti-inflammatory activity. Involved in the biosynthesis of the triterpenoid saponin glycyrrhizin. Catalyzes three sequential oxidation steps at C-30 of 11-oxo-beta-amyrin. Also able to catalyze C-30 monohydroxylation of beta-amyrin to produce 30-hydroxy-beta-amyrin. May be also responsible for the oxidation at positions C-22 and C-29 in addition to C-30. In Glycyrrhiza uralensis (Chinese licorice), this protein is 11-oxo-beta-amyrin 30-oxidase.